The chain runs to 349 residues: tRNA pseudouridine synthase D (349 aa).

Phenylalanine 26 is a substrate binding site. Aspartate 79 functions as the Nucleophile in the catalytic mechanism. A substrate-binding site is contributed by asparagine 128. The 149-residue stretch at 154–302 folds into the TRUD domain; the sequence is GVPNYFGEQR…VEGCRRAILV (149 aa). Phenylalanine 328 provides a ligand contact to substrate.

The protein belongs to the pseudouridine synthase TruD family.

The enzyme catalyses uridine(13) in tRNA = pseudouridine(13) in tRNA. In terms of biological role, responsible for synthesis of pseudouridine from uracil-13 in transfer RNAs. This Photorhabdus laumondii subsp. laumondii (strain DSM 15139 / CIP 105565 / TT01) (Photorhabdus luminescens subsp. laumondii) protein is tRNA pseudouridine synthase D.